The chain runs to 889 residues: Exocyst complex component 1 (889 aa).

A phosphoserine mark is found at serine 145 and serine 148. The stretch at 156 to 269 forms a coiled coil; sequence RAVQKTQHMD…GHVKETMEKI (114 aa). Serine 456 carries the phosphoserine modification.

The protein belongs to the SEC3 family. In terms of assembly, the exocyst complex is composed of Sec3/Exoc1, Sec5/Exoc2, Sec6/Exoc3, Sec8/Exoc4, Sec10/Exoc5, Sec15/Exoc6, Exo70/Exoc7 and Exo84/Exoc8.

Component of the exocyst complex involved in the docking of exocytic vesicles with fusion sites on the plasma membrane. In Drosophila melanogaster (Fruit fly), this protein is Exocyst complex component 1.